The chain runs to 1436 residues: Gag-Pol polyprotein (1436 aa).

Gly2 carries N-myristoyl glycine; by host lipidation. The segment at 7-31 is interaction with Gp41; that stretch reads VLSGGKLDAWEKIRLRPGGKKKYRL. An interaction with host CALM1 region spans residues 8–43; the sequence is LSGGKLDAWEKIRLRPGGKKKYRLKHLVWASRELER. The interaction with host AP3D1 stretch occupies residues 12 to 19; the sequence is KLDAWEKI. Residues 14-33 are interaction with membrane phosphatidylinositol 4,5-bisphosphate and RNA; the sequence is DAWEKIRLRPGGKKKYRLKH. Positions 16–22 match the Nuclear export signal motif; the sequence is WEKIRLR. A Nuclear localization signal motif is present at residues 26 to 32; the sequence is KKKYRLK. The interval 73 to 77 is interaction with membrane phosphatidylinositol 4,5-bisphosphate; the sequence is EELRS. Residues 102-129 form a disordered region; it reads EKMEEEQNKSKNKKAQQAAADAGNNSQV. Over residues 116 to 128 the composition is skewed to low complexity; it reads AQQAAADAGNNSQ. Phosphotyrosine; by host is present on Tyr133. Residues 190–228 are interaction with human PPIA/CYPA and NUP153; that stretch reads NTVGGHQAAMQMLKETINEEAAEWDRLHPVHAGPIAPGQ. The tract at residues 278 to 364 is dimerization/Multimerization of capsid protein p24; it reads YSPVSILDIR…GGPSHKARVL (87 aa). 2 consecutive CCHC-type zinc fingers follow at residues 392–409 and 413–430; these read IKCF…NCRA and KGCW…DCTE. Residues 490–494 are dimerization of protease; sequence PQITL. The Peptidase A2 domain occupies 509-578; sequence KEALLDTGAD…TPVNIIGRNL (70 aa). The active-site For protease activity; shared with dimeric partner is Asp514. Dimerization of protease stretches follow at residues 538–544 and 577–589; these read GIGGFIK and NLLT…LNFP. The Reverse transcriptase domain occupies 632 to 822; sequence EGKISRVGPE…PPFLWMGYEL (191 aa). Mg(2+)-binding residues include Asp698, Asp773, and Asp774. The interval 815-823 is RT 'primer grip'; the sequence is FLWMGYELH. The Tryptophan repeat motif motif lies at 986-1002; that stretch reads WETWWVEYWQATWIPEW. An RNase H type-1 domain is found at 1022–1145; it reads IIGAETFYVD…VDKLVSQGIR (124 aa). Residues Asp1031, Glu1066, Asp1086, and Asp1137 each coordinate Mg(2+). Residues 1151 to 1192 form an Integrase-type zinc finger; it reads DGIDKAQEEHEKYHNNWRAMASDFNLPPVVAKEIVASCDKCQ. Zn(2+) is bound by residues His1160, His1164, Cys1188, and Cys1191. The region spanning 1202-1352 is the Integrase catalytic domain; sequence VDCSPGIWQL…SAGERIIDII (151 aa). The Mg(2+) site is built by Asp1212, Asp1264, and Glu1300. Positions 1371–1418 form a DNA-binding region, integrase-type; it reads FRVYYRDSRDPIWKGPAKLLWKGEGAVVIQDNSDIKVVPRRKVKIIRD.

In terms of assembly, homotrimer; further assembles as hexamers of trimers. Interacts with gp41 (via C-terminus). Interacts with host CALM1; this interaction induces a conformational change in the Matrix protein, triggering exposure of the myristate group. Interacts with host AP3D1; this interaction allows the polyprotein trafficking to multivesicular bodies during virus assembly. Part of the pre-integration complex (PIC) which is composed of viral genome, matrix protein, Vpr and integrase. Homodimer; the homodimer further multimerizes as homohexamers or homopentamers. Interacts with human PPIA/CYPA; This interaction stabilizes the capsid. Interacts with human NUP153. Interacts with host PDZD8; this interaction stabilizes the capsid. Interacts with monkey TRIM5; this interaction destabilizes the capsid. As to quaternary structure, homodimer, whose active site consists of two apposed aspartic acid residues. In terms of assembly, heterodimer of p66 RT and p51 RT (RT p66/p51). Heterodimerization of RT is essential for DNA polymerase activity. The overall folding of the subdomains is similar in p66 RT and p51 RT but the spatial arrangements of the subdomains are dramatically different. Homotetramer; may further associate as a homohexadecamer. Part of the pre-integration complex (PIC) which is composed of viral genome, matrix protein, Vpr and integrase. Interacts with human SMARCB1/INI1 and human PSIP1/LEDGF isoform 1. Interacts with human KPNA3; this interaction might play a role in nuclear import of the pre-integration complex. Interacts with human NUP153; this interaction might play a role in nuclear import of the pre-integration complex. Mg(2+) serves as cofactor. In terms of processing, specific enzymatic cleavages by the viral protease yield mature proteins. The protease is released by autocatalytic cleavage. The polyprotein is cleaved during and after budding, this process is termed maturation. Proteolytic cleavage of p66 RT removes the RNase H domain to yield the p51 RT subunit. Nucleocapsid protein p7 might be further cleaved after virus entry. Tyrosine phosphorylated presumably in the virion by a host kinase. Phosphorylation is apparently not a major regulator of membrane association. Post-translationally, phosphorylated possibly by host MAPK1; this phosphorylation is necessary for Pin1-mediated virion uncoating. In terms of processing, methylated by host PRMT6, impairing its function by reducing RNA annealing and the initiation of reverse transcription.

It localises to the host cell membrane. The protein resides in the host endosome. Its subcellular location is the host multivesicular body. It is found in the virion membrane. The protein localises to the host nucleus. It localises to the host cytoplasm. The protein resides in the virion. It catalyses the reaction Specific for a P1 residue that is hydrophobic, and P1' variable, but often Pro.. It carries out the reaction Endohydrolysis of RNA in RNA/DNA hybrids. Three different cleavage modes: 1. sequence-specific internal cleavage of RNA. Human immunodeficiency virus type 1 and Moloney murine leukemia virus enzymes prefer to cleave the RNA strand one nucleotide away from the RNA-DNA junction. 2. RNA 5'-end directed cleavage 13-19 nucleotides from the RNA end. 3. DNA 3'-end directed cleavage 15-20 nucleotides away from the primer terminus.. The enzyme catalyses 3'-end directed exonucleolytic cleavage of viral RNA-DNA hybrid.. The catalysed reaction is DNA(n) + a 2'-deoxyribonucleoside 5'-triphosphate = DNA(n+1) + diphosphate. With respect to regulation, protease: The viral protease is inhibited by many synthetic protease inhibitors (PIs), such as amprenavir, atazanavir, indinavir, loprinavir, nelfinavir, ritonavir and saquinavir. Use of protease inhibitors in tritherapy regimens permit more ambitious therapeutic strategies. Reverse transcriptase/ribonuclease H: RT can be inhibited either by nucleoside RT inhibitors (NRTIs) or by non nucleoside RT inhibitors (NNRTIs). NRTIs act as chain terminators, whereas NNRTIs inhibit DNA polymerization by binding a small hydrophobic pocket near the RT active site and inducing an allosteric change in this region. Classical NRTIs are abacavir, adefovir (PMEA), didanosine (ddI), lamivudine (3TC), stavudine (d4T), tenofovir (PMPA), zalcitabine (ddC), and zidovudine (AZT). Classical NNRTIs are atevirdine (BHAP U-87201E), delavirdine, efavirenz (DMP-266), emivirine (I-EBU), and nevirapine (BI-RG-587). The tritherapies used as a basic effective treatment of AIDS associate two NRTIs and one NNRTI. Its function is as follows. Mediates, with Gag polyprotein, the essential events in virion assembly, including binding the plasma membrane, making the protein-protein interactions necessary to create spherical particles, recruiting the viral Env proteins, and packaging the genomic RNA via direct interactions with the RNA packaging sequence (Psi). Gag-Pol polyprotein may regulate its own translation, by the binding genomic RNA in the 5'-UTR. At low concentration, the polyprotein would promote translation, whereas at high concentration, the polyprotein would encapsidate genomic RNA and then shut off translation. Functionally, targets the polyprotein to the plasma membrane via a multipartite membrane-binding signal, that includes its myristoylated N-terminus. Matrix protein is part of the pre-integration complex. Implicated in the release from host cell mediated by Vpu. Binds to RNA. Forms the conical core that encapsulates the genomic RNA-nucleocapsid complex in the virion. Most core are conical, with only 7% tubular. The core is constituted by capsid protein hexamer subunits. The core is disassembled soon after virion entry. Host restriction factors such as TRIM5-alpha or TRIMCyp bind retroviral capsids and cause premature capsid disassembly, leading to blocks in reverse transcription. Capsid restriction by TRIM5 is one of the factors which restricts HIV-1 to the human species. Host PIN1 apparently facilitates the virion uncoating. On the other hand, interactions with PDZD8 or CYPA stabilize the capsid. In terms of biological role, encapsulates and protects viral dimeric unspliced genomic RNA (gRNA). Binds these RNAs through its zinc fingers. Acts as a nucleic acid chaperone which is involved in rearangement of nucleic acid secondary structure during gRNA retrotranscription. Also facilitates template switch leading to recombination. As part of the polyprotein, participates in gRNA dimerization, packaging, tRNA incorporation and virion assembly. Its function is as follows. Aspartyl protease that mediates proteolytic cleavages of Gag and Gag-Pol polyproteins during or shortly after the release of the virion from the plasma membrane. Cleavages take place as an ordered, step-wise cascade to yield mature proteins. This process is called maturation. Displays maximal activity during the budding process just prior to particle release from the cell. Also cleaves Nef and Vif, probably concomitantly with viral structural proteins on maturation of virus particles. Hydrolyzes host EIF4GI and PABP1 in order to shut off the capped cellular mRNA translation. The resulting inhibition of cellular protein synthesis serves to ensure maximal viral gene expression and to evade host immune response. Also mediates cleavage of host YTHDF3. Mediates cleavage of host CARD8, thereby activating the CARD8 inflammasome, leading to the clearance of latent HIV-1 in patient CD4(+) T-cells after viral reactivation; in contrast, HIV-1 can evade CARD8-sensing when its protease remains inactive in infected cells prior to viral budding. Functionally, multifunctional enzyme that converts the viral RNA genome into dsDNA in the cytoplasm, shortly after virus entry into the cell. This enzyme displays a DNA polymerase activity that can copy either DNA or RNA templates, and a ribonuclease H (RNase H) activity that cleaves the RNA strand of RNA-DNA heteroduplexes in a partially processive 3' to 5' endonucleasic mode. Conversion of viral genomic RNA into dsDNA requires many steps. A tRNA(3)-Lys binds to the primer-binding site (PBS) situated at the 5'-end of the viral RNA. RT uses the 3' end of the tRNA primer to perform a short round of RNA-dependent minus-strand DNA synthesis. The reading proceeds through the U5 region and ends after the repeated (R) region which is present at both ends of viral RNA. The portion of the RNA-DNA heteroduplex is digested by the RNase H, resulting in a ssDNA product attached to the tRNA primer. This ssDNA/tRNA hybridizes with the identical R region situated at the 3' end of viral RNA. This template exchange, known as minus-strand DNA strong stop transfer, can be either intra- or intermolecular. RT uses the 3' end of this newly synthesized short ssDNA to perform the RNA-dependent minus-strand DNA synthesis of the whole template. RNase H digests the RNA template except for two polypurine tracts (PPTs) situated at the 5'-end and near the center of the genome. It is not clear if both polymerase and RNase H activities are simultaneous. RNase H probably can proceed both in a polymerase-dependent (RNA cut into small fragments by the same RT performing DNA synthesis) and a polymerase-independent mode (cleavage of remaining RNA fragments by free RTs). Secondly, RT performs DNA-directed plus-strand DNA synthesis using the PPTs that have not been removed by RNase H as primers. PPTs and tRNA primers are then removed by RNase H. The 3' and 5' ssDNA PBS regions hybridize to form a circular dsDNA intermediate. Strand displacement synthesis by RT to the PBS and PPT ends produces a blunt ended, linear dsDNA copy of the viral genome that includes long terminal repeats (LTRs) at both ends. Catalyzes viral DNA integration into the host chromosome, by performing a series of DNA cutting and joining reactions. This enzyme activity takes place after virion entry into a cell and reverse transcription of the RNA genome in dsDNA. The first step in the integration process is 3' processing. This step requires a complex comprising the viral genome, matrix protein, Vpr and integrase. This complex is called the pre-integration complex (PIC). The integrase protein removes 2 nucleotides from each 3' end of the viral DNA, leaving recessed CA OH's at the 3' ends. In the second step, the PIC enters cell nucleus. This process is mediated through integrase and Vpr proteins, and allows the virus to infect a non dividing cell. This ability to enter the nucleus is specific of lentiviruses, other retroviruses cannot and rely on cell division to access cell chromosomes. In the third step, termed strand transfer, the integrase protein joins the previously processed 3' ends to the 5' ends of strands of target cellular DNA at the site of integration. The 5'-ends are produced by integrase-catalyzed staggered cuts, 5 bp apart. A Y-shaped, gapped, recombination intermediate results, with the 5'-ends of the viral DNA strands and the 3' ends of target DNA strands remaining unjoined, flanking a gap of 5 bp. The last step is viral DNA integration into host chromosome. This involves host DNA repair synthesis in which the 5 bp gaps between the unjoined strands are filled in and then ligated. Since this process occurs at both cuts flanking the HIV genome, a 5 bp duplication of host DNA is produced at the ends of HIV-1 integration. Alternatively, Integrase may catalyze the excision of viral DNA just after strand transfer, this is termed disintegration. This Homo sapiens (Human) protein is Gag-Pol polyprotein (gag-pol).